Here is an 88-residue protein sequence, read N- to C-terminus: U-scoloptoxin(XY)-Er1b (88 aa).

Positions 1 to 24 are cleaved as a signal peptide; that stretch reads MASQVVLSFALVVVLAVFVGQVDS. A disordered region spans residues 66–88; it reads RPELSPGALDDSSEEKDNEASLA. The propeptide occupies 79 to 88; it reads EEKDNEASLA.

This sequence belongs to the scoloptoxin-XY family. Post-translationally, contains 3 disulfide bonds. Expressed by the venom gland.

Its subcellular location is the secreted. The sequence is that of U-scoloptoxin(XY)-Er1b from Ethmostigmus rubripes (Giant centipede).